The primary structure comprises 155 residues: Small ribosomal subunit protein uS7c (155 aa).

Belongs to the universal ribosomal protein uS7 family. As to quaternary structure, part of the 30S ribosomal subunit.

It is found in the plastid. The protein resides in the chloroplast. In terms of biological role, one of the primary rRNA binding proteins, it binds directly to 16S rRNA where it nucleates assembly of the head domain of the 30S subunit. In Lilium superbum (Turk's cap lily), this protein is Small ribosomal subunit protein uS7c (rps7).